Consider the following 255-residue polypeptide: Hydroxyacylglutathione hydrolase (255 aa).

7 residues coordinate Zn(2+): H55, H57, D59, H60, H113, D132, and H170.

This sequence belongs to the metallo-beta-lactamase superfamily. Glyoxalase II family. Monomer. It depends on Zn(2+) as a cofactor.

The enzyme catalyses an S-(2-hydroxyacyl)glutathione + H2O = a 2-hydroxy carboxylate + glutathione + H(+). It functions in the pathway secondary metabolite metabolism; methylglyoxal degradation; (R)-lactate from methylglyoxal: step 2/2. Thiolesterase that catalyzes the hydrolysis of S-D-lactoyl-glutathione to form glutathione and D-lactic acid. The polypeptide is Hydroxyacylglutathione hydrolase (Methylobacterium nodulans (strain LMG 21967 / CNCM I-2342 / ORS 2060)).